Here is a 78-residue protein sequence, read N- to C-terminus: Large ribosomal subunit protein bL28 (78 aa).

The segment at 1–24 is disordered; sequence MSRVCQVTGKRPAVGNNRSHANNA.

The protein belongs to the bacterial ribosomal protein bL28 family.

The sequence is that of Large ribosomal subunit protein bL28 from Aeromonas salmonicida (strain A449).